The chain runs to 639 residues: AP2-like ethylene-responsive transcription factor CRL5 (639 aa).

2 disordered regions span residues 25 to 59 (PHMASSTMDEHHHVHHHQQQQQQQQQQQHHQQQQH) and 258 to 277 (GRKRGGAGGGGQKQPVHHRK). Residues 43-59 (QQQQQQQQQQHHQQQQH) show a composition bias toward low complexity. DNA-binding regions (AP2/ERF) lie at residues 288-351 (QYRG…INFP) and 387-445 (MYRG…TNFD). The segment covering 547 to 561 (QQQQQHMSMSAASSL) has biased composition (low complexity). Residues 547-579 (QQQQQHMSMSAASSLVTSLSNSREGSPDRGGGL) form a disordered region.

The protein belongs to the AP2/ERF transcription factor family. AP2 subfamily. In terms of tissue distribution, highly expressed at the base of the stem. Expressed in stems. Expressed a low levels in crown roots and seeds. Expressed in the stem region where adventitious (crown) root initiation occurs.

Its subcellular location is the nucleus. Acts as a positive regulator of adventitious (crown) root formation by promoting its initiation. Promotes adventitious root initiation through repression of cytokinin signaling by positively regulating the two-component response regulator RR1. Regulated by the auxin response factor and transcriptional activator ARF23/ARF1. The polypeptide is AP2-like ethylene-responsive transcription factor CRL5 (Oryza sativa subsp. japonica (Rice)).